The sequence spans 513 residues: V-type proton ATPase subunit B, kidney isoform (513 aa).

An ATP-binding site is contributed by arginine 394. Positions 510–513 match the PDZ-binding motif; sequence DTAL.

Belongs to the ATPase alpha/beta chains family. V-ATPase is a heteromultimeric enzyme made up of two complexes: the ATP-hydrolytic V1 complex and the proton translocation V0 complex. The V1 complex consists of three catalytic AB heterodimers that form a heterohexamer, three peripheral stalks each consisting of EG heterodimers, one central rotor including subunits D and F, and the regulatory subunits C and H. The proton translocation complex V0 consists of the proton transport subunit a, a ring of proteolipid subunits c9c'', rotary subunit d, subunits e and f, and the accessory subunits ATP6AP1/Ac45 and ATP6AP2/PRR. Forms a complex with NHERF1 and SCL4A7. As to expression, kidney cortex and medulla.

It is found in the apical cell membrane. The protein localises to the basolateral cell membrane. Functionally, non-catalytic subunit of the V1 complex of vacuolar(H+)-ATPase (V-ATPase), a multisubunit enzyme composed of a peripheral complex (V1) that hydrolyzes ATP and a membrane integral complex (V0) that translocates protons. V-ATPase is responsible for acidifying and maintaining the pH of intracellular compartments and in some cell types, is targeted to the plasma membrane, where it is responsible for acidifying the extracellular environment. Essential for the proper assembly and activity of V-ATPase. In renal intercalated cells, mediates secretion of protons (H+) into the urine thereby ensuring correct urinary acidification. Required for optimal olfactory function by mediating the acidification of the nasal olfactory epithelium. This chain is V-type proton ATPase subunit B, kidney isoform (ATP6V1B1), found in Bos taurus (Bovine).